Consider the following 168-residue polypeptide: Transcription elongation factor GreB (168 aa).

Residues 61–84 (KKMLREIDSRVRFLRKRLENLKVV) are a coiled coil.

This sequence belongs to the GreA/GreB family. GreB subfamily.

In terms of biological role, necessary for efficient RNA polymerase transcription elongation past template-encoded arresting sites. The arresting sites in DNA have the property of trapping a certain fraction of elongating RNA polymerases that pass through, resulting in locked ternary complexes. Cleavage of the nascent transcript by cleavage factors such as GreA or GreB allows the resumption of elongation from the new 3'terminus. GreB releases sequences of up to 9 nucleotides in length. The polypeptide is Transcription elongation factor GreB (Pseudomonas aeruginosa (strain ATCC 15692 / DSM 22644 / CIP 104116 / JCM 14847 / LMG 12228 / 1C / PRS 101 / PAO1)).